Reading from the N-terminus, the 121-residue chain is Large ribosomal subunit protein bL12 (121 aa).

The protein belongs to the bacterial ribosomal protein bL12 family. Homodimer. Part of the ribosomal stalk of the 50S ribosomal subunit. Forms a multimeric L10(L12)X complex, where L10 forms an elongated spine to which 2 to 4 L12 dimers bind in a sequential fashion. Binds GTP-bound translation factors.

Functionally, forms part of the ribosomal stalk which helps the ribosome interact with GTP-bound translation factors. Is thus essential for accurate translation. The polypeptide is Large ribosomal subunit protein bL12 (Mesomycoplasma hyopneumoniae (strain 7448) (Mycoplasma hyopneumoniae)).